A 356-amino-acid polypeptide reads, in one-letter code: S-adenosylmethionine:tRNA ribosyltransferase-isomerase (356 aa).

This sequence belongs to the QueA family. In terms of assembly, monomer.

It is found in the cytoplasm. It catalyses the reaction 7-aminomethyl-7-carbaguanosine(34) in tRNA + S-adenosyl-L-methionine = epoxyqueuosine(34) in tRNA + adenine + L-methionine + 2 H(+). Its pathway is tRNA modification; tRNA-queuosine biosynthesis. Its function is as follows. Transfers and isomerizes the ribose moiety from AdoMet to the 7-aminomethyl group of 7-deazaguanine (preQ1-tRNA) to give epoxyqueuosine (oQ-tRNA). The sequence is that of S-adenosylmethionine:tRNA ribosyltransferase-isomerase from Cronobacter sakazakii (strain ATCC BAA-894) (Enterobacter sakazakii).